A 155-amino-acid polypeptide reads, in one-letter code: Riboflavin kinase (155 aa).

ATP contacts are provided by Gly-15, Lys-21, Thr-27, and Asn-29. Mg(2+)-binding residues include Thr-27 and Asn-29. The active-site Nucleophile is Glu-79. Positions 82, 84, and 91 each coordinate ATP. 3 residues coordinate FMN: Arg-104, Lys-107, and Phe-109.

In terms of assembly, monomer. Directly interacts with TNFRSF1A death domain. TNFRSF1A-binding may be supported by TRADD. In the absence of TNFRSF1A, interacts with TRADD. Independently of TNFRSF1A, interacts with the NADPH oxidase subunit CYBA. Requires Zn(2+) as cofactor. Mg(2+) is required as a cofactor. As to expression, detected in brain, placenta and urinary bladder.

It is found in the cytoplasm. It carries out the reaction riboflavin + ATP = FMN + ADP + H(+). The protein operates within cofactor biosynthesis; FMN biosynthesis; FMN from riboflavin (ATP route): step 1/1. Its function is as follows. Catalyzes the phosphorylation of riboflavin (vitamin B2) to form flavin-mononucleotide (FMN), hence rate-limiting enzyme in the synthesis of FAD. Essential for TNF-induced reactive oxygen species (ROS) production. Through its interaction with both TNFRSF1A and CYBA, physically and functionally couples TNFRSF1A to NADPH oxidase. TNF-activation of RFK may enhance the incorporation of FAD in NADPH oxidase, a critical step for the assembly and activation of NADPH oxidase. The polypeptide is Riboflavin kinase (RFK) (Homo sapiens (Human)).